The chain runs to 192 residues: Small ribosomal subunit protein uS4B (192 aa).

A phosphoserine mark is found at Ser-89 and Ser-179. One can recognise an S4 RNA-binding domain in the interval 107–181; that stretch reads RRLQTQVFKL…CKRKRLRSQQ (75 aa). The disordered stretch occupies residues 166–192; that stretch reads GGRPGRCKRKRLRSQQEGGEGEEAEEE.

Belongs to the universal ribosomal protein uS4 family. In terms of assembly, component of the small ribosomal subunit (SSU). Mature yeast ribosomes consist of a small (40S) and a large (60S) subunit. The 40S small subunit contains 1 molecule of ribosomal RNA (18S rRNA) and at least 33 different proteins. The large 60S subunit contains 3 rRNA molecules (25S, 5.8S and 5S rRNA) and at least 46 different proteins. Interacts with snoRNA U3. uS11 interacts with MPP10. Component of the ribosomal small subunit (SSU) processome composed of at least 40 protein subunits and snoRNA U3.

The protein localises to the cytoplasm. Component of the ribosome, a large ribonucleoprotein complex responsible for the synthesis of proteins in the cell. The small ribosomal subunit (SSU) binds messenger RNAs (mRNAs) and translates the encoded message by selecting cognate aminoacyl-transfer RNA (tRNA) molecules. The large subunit (LSU) contains the ribosomal catalytic site termed the peptidyl transferase center (PTC), which catalyzes the formation of peptide bonds, thereby polymerizing the amino acids delivered by tRNAs into a polypeptide chain. The nascent polypeptides leave the ribosome through a tunnel in the LSU and interact with protein factors that function in enzymatic processing, targeting, and the membrane insertion of nascent chains at the exit of the ribosomal tunnel. uS4 is involved in nucleolar processing of pre-18S ribosomal RNA and ribosome assembly. The chain is Small ribosomal subunit protein uS4B (rps902) from Schizosaccharomyces pombe (strain 972 / ATCC 24843) (Fission yeast).